The following is a 247-amino-acid chain: Uridylate kinase (247 aa).

19-22 (KISG) contributes to the ATP binding site. Position 61 (Gly61) interacts with UMP. Gly62 and Arg66 together coordinate ATP. Residues Asp81 and 142–149 (TGNPFFTT) contribute to the UMP site. Positions 169, 170, 175, and 178 each coordinate ATP.

This sequence belongs to the UMP kinase family. As to quaternary structure, homohexamer.

The protein localises to the cytoplasm. The enzyme catalyses UMP + ATP = UDP + ADP. It participates in pyrimidine metabolism; CTP biosynthesis via de novo pathway; UDP from UMP (UMPK route): step 1/1. Its activity is regulated as follows. Inhibited by UTP. Functionally, catalyzes the reversible phosphorylation of UMP to UDP. The chain is Uridylate kinase from Wolbachia pipientis wMel.